The primary structure comprises 176 residues: Sec-independent protein translocase protein TatB (176 aa).

The helical transmembrane segment at 1 to 21 (MLDLGLSKMALIGVVALVVLG) threads the bilayer. Residues 155-176 (QSGAARVARHQPASLRRPTRFL) form a disordered region.

This sequence belongs to the TatB family. In terms of assembly, the Tat system comprises two distinct complexes: a TatABC complex, containing multiple copies of TatA, TatB and TatC subunits, and a separate TatA complex, containing only TatA subunits. Substrates initially bind to the TatABC complex, which probably triggers association of the separate TatA complex to form the active translocon.

Its subcellular location is the cell inner membrane. In terms of biological role, part of the twin-arginine translocation (Tat) system that transports large folded proteins containing a characteristic twin-arginine motif in their signal peptide across membranes. Together with TatC, TatB is part of a receptor directly interacting with Tat signal peptides. TatB may form an oligomeric binding site that transiently accommodates folded Tat precursor proteins before their translocation. In Burkholderia ambifaria (strain ATCC BAA-244 / DSM 16087 / CCUG 44356 / LMG 19182 / AMMD) (Burkholderia cepacia (strain AMMD)), this protein is Sec-independent protein translocase protein TatB.